The chain runs to 38 residues: Photosystem II reaction center protein L (38 aa).

Residues 17–37 (SLYWGLLLIFVLAVLFSNYFF) traverse the membrane as a helical segment.

The protein belongs to the PsbL family. As to quaternary structure, PSII is composed of 1 copy each of membrane proteins PsbA, PsbB, PsbC, PsbD, PsbE, PsbF, PsbH, PsbI, PsbJ, PsbK, PsbL, PsbM, PsbT, PsbX, PsbY, PsbZ, Psb30/Ycf12, at least 3 peripheral proteins of the oxygen-evolving complex and a large number of cofactors. It forms dimeric complexes.

The protein resides in the plastid. The protein localises to the chloroplast thylakoid membrane. Its function is as follows. One of the components of the core complex of photosystem II (PSII). PSII is a light-driven water:plastoquinone oxidoreductase that uses light energy to abstract electrons from H(2)O, generating O(2) and a proton gradient subsequently used for ATP formation. It consists of a core antenna complex that captures photons, and an electron transfer chain that converts photonic excitation into a charge separation. This subunit is found at the monomer-monomer interface and is required for correct PSII assembly and/or dimerization. This Angiopteris evecta (Mule's foot fern) protein is Photosystem II reaction center protein L.